Consider the following 345-residue polypeptide: Aminopeptidase YpdE (345 aa).

Residues histidine 62 and aspartate 166 each contribute to the a divalent metal cation site. The active-site Proton acceptor is glutamate 198. The a divalent metal cation site is built by glutamate 199, aspartate 221, and histidine 308.

The protein belongs to the peptidase M42 family. Co(2+) is required as a cofactor. The cofactor is Ni(2+). Mn(2+) serves as cofactor. It depends on Cu(2+) as a cofactor.

In terms of biological role, has a broad aminopeptidase activity on non-blocked peptides by progressively cleaving amino acids off the peptide substrate. Aminopeptidase activity stops at the residue before the first proline in the peptide. Cannot cleave when proline is the first N-terminal residue. The sequence is that of Aminopeptidase YpdE (ypdE) from Escherichia coli (strain K12).